We begin with the raw amino-acid sequence, 545 residues long: Adenine deaminase (545 aa).

The protein belongs to the metallo-dependent hydrolases superfamily. Adenine deaminase family. Mn(2+) is required as a cofactor.

It carries out the reaction adenine + H2O + H(+) = hypoxanthine + NH4(+). The chain is Adenine deaminase from Salinibacter ruber (strain DSM 13855 / M31).